Here is a 765-residue protein sequence, read N- to C-terminus: Probable exo-1,4-beta-xylosidase bxlB (765 aa).

The N-terminal stretch at methionine 1–alanine 25 is a signal peptide. 2 N-linked (GlcNAc...) asparagine glycosylation sites follow: asparagine 67 and asparagine 107. Aspartate 293 is a catalytic residue. N-linked (GlcNAc...) asparagine glycosylation is found at asparagine 345, asparagine 412, asparagine 423, asparagine 464, and asparagine 761.

Belongs to the glycosyl hydrolase 3 family.

It is found in the secreted. The catalysed reaction is Hydrolysis of (1-&gt;4)-beta-D-xylans, to remove successive D-xylose residues from the non-reducing termini.. The protein operates within glycan degradation; xylan degradation. Xylan 1,4-beta-xylosidase involved in the hydrolysis of xylan, a major structural heterogeneous polysaccharide found in plant biomass representing the second most abundant polysaccharide in the biosphere, after cellulose. The polypeptide is Probable exo-1,4-beta-xylosidase bxlB (bxlB) (Aspergillus terreus (strain NIH 2624 / FGSC A1156)).